Reading from the N-terminus, the 518-residue chain is Cytochrome P450 736A117 (518 aa).

Asparagine 12 carries an N-linked (GlcNAc...) asparagine glycan. Residues 17–37 traverse the membrane as a helical segment; sequence FLQPLAFTLLAIFLVLLYTWY. N-linked (GlcNAc...) asparagine glycosylation is found at asparagine 185, asparagine 275, and asparagine 356. Position 460 (cysteine 460) interacts with heme.

Belongs to the cytochrome P450 family. It depends on heme as a cofactor. Expressed at similar levels in fruit kernel, seedlings, leaves, stems and buds.

It is found in the membrane. This Prunus mume (Japanese apricot) protein is Cytochrome P450 736A117.